A 269-amino-acid polypeptide reads, in one-letter code: Thymidylate synthase (269 aa).

DUMP-binding positions include Arg21 and Arg125–Arg126. Cys145 functions as the Nucleophile in the catalytic mechanism. DUMP is bound by residues Arg171–Asp174, Asn182, and His212–Tyr214. Asp174 is a binding site for (6R)-5,10-methylene-5,6,7,8-tetrahydrofolate. Ala268 is a (6R)-5,10-methylene-5,6,7,8-tetrahydrofolate binding site.

It belongs to the thymidylate synthase family. Bacterial-type ThyA subfamily. As to quaternary structure, homodimer.

The protein localises to the cytoplasm. The catalysed reaction is dUMP + (6R)-5,10-methylene-5,6,7,8-tetrahydrofolate = 7,8-dihydrofolate + dTMP. It participates in pyrimidine metabolism; dTTP biosynthesis. Functionally, catalyzes the reductive methylation of 2'-deoxyuridine-5'-monophosphate (dUMP) to 2'-deoxythymidine-5'-monophosphate (dTMP) while utilizing 5,10-methylenetetrahydrofolate (mTHF) as the methyl donor and reductant in the reaction, yielding dihydrofolate (DHF) as a by-product. This enzymatic reaction provides an intracellular de novo source of dTMP, an essential precursor for DNA biosynthesis. This chain is Thymidylate synthase, found in Cutibacterium acnes (strain DSM 16379 / KPA171202) (Propionibacterium acnes).